The following is a 260-amino-acid chain: 3-alpha-(or 20-beta)-hydroxysteroid dehydrogenase (260 aa).

The NAD(+) site is built by Arg-17, Met-19, Asp-38, Asp-61, Val-62, Asn-88, Tyr-153, Lys-157, Val-186, Thr-188, and Thr-191. The active-site Proton acceptor is the Tyr-153.

This sequence belongs to the short-chain dehydrogenases/reductases (SDR) family. In terms of assembly, homotetramer.

It catalyses the reaction androstan-3alpha,17beta-diol + NAD(+) = 17beta-hydroxyandrostanone + NADH + H(+). It functions in the pathway lipid metabolism; steroid degradation. Functionally, probably involved in steroid metabolism. In Mycobacterium tuberculosis (strain CDC 1551 / Oshkosh), this protein is 3-alpha-(or 20-beta)-hydroxysteroid dehydrogenase (fabG3).